A 165-amino-acid chain; its full sequence is Large ribosomal subunit protein uL10 (165 aa).

It belongs to the universal ribosomal protein uL10 family. In terms of assembly, part of the ribosomal stalk of the 50S ribosomal subunit. The N-terminus interacts with L11 and the large rRNA to form the base of the stalk. The C-terminus forms an elongated spine to which L12 dimers bind in a sequential fashion forming a multimeric L10(L12)X complex.

Its function is as follows. Forms part of the ribosomal stalk, playing a central role in the interaction of the ribosome with GTP-bound translation factors. This Mycoplasma capricolum subsp. capricolum (strain California kid / ATCC 27343 / NCTC 10154) protein is Large ribosomal subunit protein uL10.